The primary structure comprises 173 residues: MTLDVFTKVVSQADSRGEFLSNEQLDALANVVKEGNKRLDVVNRITSNASAIVTNAARALFEEQPQLIAPGGNAYTNRRMAACLRDMEIILRYVTYAILAGDASVLDDRCLNGLRETYQALGTPGSSVAVGVQKMKDAAVGIANDPNGITKGDCSQLISEVASYFDRAAAAVG.

Asn73 is modified (N4-methylasparagine). Residues Cys83 and Cys154 each coordinate (2R,3E)-phycocyanobilin.

It belongs to the phycobiliprotein family. In terms of assembly, heterodimer of an alpha and a beta subunit. Part of 2 PBS rod complexes, the conventional PBS rod and a photosystem I-specific CpcL-PBS rod. Post-translationally, contains two covalently linked bilin chromophores.

It localises to the cellular thylakoid membrane. Its function is as follows. Light-harvesting photosynthetic bile pigment-protein from the phycobiliprotein complex (phycobilisome, PBS). Phycocyanin is the major phycobiliprotein in the PBS rod. The chain is C-phycocyanin beta subunit (cpcB) from Nostoc sp. (strain PCC 7120 / SAG 25.82 / UTEX 2576).